The sequence spans 109 residues: MTAKVRVIFRAAGGFEHLVETEAGVSLMEAAVLNGVDGIEAVCGGACACATCHVYVGPEWLDALKPPSETEDEMLDCVAERAPHSRLSCQIRLTDLLDGLTLELPKAQS.

Residues 3-108 (AKVRVIFRAA…GLTLELPKAQ (106 aa)) enclose the 2Fe-2S ferredoxin-type domain. C43, C49, C52, and C89 together coordinate [2Fe-2S] cluster.

This sequence belongs to the adrenodoxin/putidaredoxin family. Monomer. Carbazole 1,9a-dioxygenase complex consists of a terminal oxygenase component CarAa, a ferredoxin reductase component fdr and a ferredoxin component CarAc. Requires [2Fe-2S] cluster as cofactor.

Its function is as follows. Part of the multicomponent carbazole 1,9a-dioxygenase (CARDO), that converts carbazole (CAR) into 2-aminobiphenyl-2,3-diol. Acts as a mediator in the electron transfer from fdr to CarAa. The polypeptide is Ferredoxin CarAc (carAc) (Sphingomonas sp).